A 595-amino-acid chain; its full sequence is Probable serine/threonine-protein kinase fhkC (595 aa).

Residues 1–84 (MNSNKEETTA…MTEDNSKEED (84 aa)) form a disordered region. Over residues 18-31 (EEQQQQQQPQQQEQ) the composition is skewed to low complexity. Residues 32-49 (INTTTASTTSNGENTASD) show a composition bias toward polar residues. Over residues 50 to 70 (NNNNSNNNNNNNTNNTNTNNN) the composition is skewed to low complexity. Residues 116 to 170 (IILGRSKGVCNYTFTSPTVSGKHCKIYRDPTVKSRNVAFVDDTSTNGTFINNEVI) form the FHA domain. One can recognise a Protein kinase domain in the interval 218 to 479 (YDLREVLGTG…IDQALNHPWF (262 aa)). ATP contacts are provided by residues 224-232 (LGTGNFASV) and K247. The active-site Proton acceptor is D342. At T377 the chain carries Phosphothreonine; by autocatalysis. The segment at 494 to 595 (KLEFPPPSTN…DEHEQKKVKN (102 aa)) is disordered. A compositionally biased stretch (polar residues) spans 508–520 (PTPNTTSSNSQLV). Residues 530-567 (DNTTDNNNNNNNNNNNNNNNNNNNTTNNSNNIDNNNGN) show a composition bias toward low complexity. Residues 585–595 (NDEHEQKKVKN) show a composition bias toward basic and acidic residues.

This sequence belongs to the protein kinase superfamily. CAMK Ser/Thr protein kinase family. CHK2 subfamily.

The enzyme catalyses L-seryl-[protein] + ATP = O-phospho-L-seryl-[protein] + ADP + H(+). It carries out the reaction L-threonyl-[protein] + ATP = O-phospho-L-threonyl-[protein] + ADP + H(+). The protein is Probable serine/threonine-protein kinase fhkC (fhkC) of Dictyostelium discoideum (Social amoeba).